Consider the following 107-residue polypeptide: Sperm-specific class P protein 34 (107 aa).

The tract at residues 1-26 is disordered; the sequence is MINVDPPTGNYPATGGNSTHNITSES. Residues 1–107 form the MSP domain; it reads MINVDPPTGN…GEIIVKLIAA (107 aa). Over residues 15 to 25 the composition is skewed to polar residues; it reads GGNSTHNITSE.

In terms of tissue distribution, expressed at higher level in testis.

The protein is Sperm-specific class P protein 34 (ssp-34) of Caenorhabditis elegans.